The sequence spans 25 residues: Ranatuerin-1C (25 aa).

A disulfide bridge links Cys19 with Cys25.

Expressed by the skin glands.

The protein localises to the secreted. Functionally, antibacterial activity against Gram-positive bacterium S.aureus (MIC=55 uM) and Gram-negative bacterium E.coli (MIC=1.5 uM). Has activity against C.albicans (MIC=58 uM). This is Ranatuerin-1C from Lithobates clamitans (Green frog).